The primary structure comprises 383 residues: Succinyl-diaminopimelate desuccinylase (383 aa).

Position 68 (His-68) interacts with Zn(2+). Residue Asp-70 is part of the active site. A Zn(2+)-binding site is contributed by Asp-100. The Proton acceptor role is filled by Glu-130. Zn(2+) is bound by residues Glu-131, Glu-159, and His-352.

The protein belongs to the peptidase M20A family. DapE subfamily. In terms of assembly, homodimer. Zn(2+) serves as cofactor. It depends on Co(2+) as a cofactor.

The catalysed reaction is N-succinyl-(2S,6S)-2,6-diaminopimelate + H2O = (2S,6S)-2,6-diaminopimelate + succinate. It participates in amino-acid biosynthesis; L-lysine biosynthesis via DAP pathway; LL-2,6-diaminopimelate from (S)-tetrahydrodipicolinate (succinylase route): step 3/3. Its function is as follows. Catalyzes the hydrolysis of N-succinyl-L,L-diaminopimelic acid (SDAP), forming succinate and LL-2,6-diaminopimelate (DAP), an intermediate involved in the bacterial biosynthesis of lysine and meso-diaminopimelic acid, an essential component of bacterial cell walls. This is Succinyl-diaminopimelate desuccinylase from Granulibacter bethesdensis (strain ATCC BAA-1260 / CGDNIH1).